A 755-amino-acid chain; its full sequence is Periplasmic nitrate reductase (755 aa).

Residues 1–32 (MSTSRRDFLKYFAMSAAVAAASGAGFGSLALA) constitute a signal peptide (tat-type signal). The region spanning 38–93 (EKWVKGVCRYCGTGCGVLVGVKDGKAVAIQGDPNNHNAGLLCLKGSLLIPVLNSKE) is the 4Fe-4S Mo/W bis-MGD-type domain. The [4Fe-4S] cluster site is built by cysteine 45, cysteine 48, cysteine 52, and cysteine 79. Mo-bis(molybdopterin guanine dinucleotide)-binding positions include lysine 81, glutamine 143, asparagine 168, cysteine 172, 208 to 212 (NTSEA), 236 to 238 (DPR), 255 to 257 (GTD), methionine 340, glutamine 344, asparagine 450, 475 to 477 (IEA), and 647 to 656 (SMRVIDHWHT). Residues 648 to 653 (MRVIDH) and phenylalanine 721 each bind substrate. Mo-bis(molybdopterin guanine dinucleotide) contacts are provided by asparagine 729 and lysine 746.

It belongs to the prokaryotic molybdopterin-containing oxidoreductase family. NasA/NapA/NarB subfamily. In terms of assembly, monomer. Component of the periplasmic nitrate reductase NapAB complex composed of NapA and NapB. The cofactor is [4Fe-4S] cluster. Mo-bis(molybdopterin guanine dinucleotide) is required as a cofactor. Predicted to be exported by the Tat system. The position of the signal peptide cleavage has been experimentally proven.

Its subcellular location is the periplasm. The enzyme catalyses 2 Fe(II)-[cytochrome] + nitrate + 2 H(+) = 2 Fe(III)-[cytochrome] + nitrite + H2O. With respect to regulation, activated by potassium and sodium ions and inhibited by magnesium and calcium ions. Catalytic subunit of the periplasmic nitrate reductase complex NapAB. Receives electrons from NapB and catalyzes the reduction of nitrate to nitrite. The sequence is that of Periplasmic nitrate reductase from Desulfovibrio desulfuricans (strain ATCC 27774 / DSM 6949 / MB).